The chain runs to 69 residues: Defensin-like protein 166 (69 aa).

Positions 1–15 are cleaved as a signal peptide; it reads MIIVIIFLVIYFNNQ. Cystine bridges form between Cys19-Cys68, Cys24-Cys44, Cys29-Cys62, and Cys33-Cys64.

Belongs to the DEFL family.

It localises to the secreted. In Arabidopsis thaliana (Mouse-ear cress), this protein is Defensin-like protein 166.